A 437-amino-acid polypeptide reads, in one-letter code: Glutamate-1-semialdehyde 2,1-aminomutase (437 aa).

Lys-273 carries the post-translational modification N6-(pyridoxal phosphate)lysine.

This sequence belongs to the class-III pyridoxal-phosphate-dependent aminotransferase family. HemL subfamily. In terms of assembly, homodimer. Pyridoxal 5'-phosphate is required as a cofactor.

The protein localises to the cytoplasm. It catalyses the reaction (S)-4-amino-5-oxopentanoate = 5-aminolevulinate. It participates in porphyrin-containing compound metabolism; protoporphyrin-IX biosynthesis; 5-aminolevulinate from L-glutamyl-tRNA(Glu): step 2/2. The protein is Glutamate-1-semialdehyde 2,1-aminomutase of Chlamydia felis (strain Fe/C-56) (Chlamydophila felis).